Here is a 1589-residue protein sequence, read N- to C-terminus: Pentafunctional AROM polypeptide (1589 aa).

Residues 1 to 392 (MVKFEKVPIL…YGKSAHYVND (392 aa)) are 3-dehydroquinate synthase. NAD(+) is bound by residues 43–45 (DTN), 78–81 (EANK), 109–111 (GGI), and Asp-114. Arg-125 serves as a coordination point for 7-phospho-2-dehydro-3-deoxy-D-arabino-heptonate. Residue 134–135 (TS) coordinates NAD(+). Residues Asp-141 and Lys-147 each coordinate 7-phospho-2-dehydro-3-deoxy-D-arabino-heptonate. Lys-156 serves as a coordination point for NAD(+). Asn-157 is a binding site for 7-phospho-2-dehydro-3-deoxy-D-arabino-heptonate. NAD(+)-binding positions include 174–177 (WLET) and Asn-185. Glu-189 contacts Zn(2+). Residues 189–192 (EVIK) and Lys-258 each bind 7-phospho-2-dehydro-3-deoxy-D-arabino-heptonate. Glu-268 serves as the catalytic Proton acceptor; for 3-dehydroquinate synthase activity. 7-phospho-2-dehydro-3-deoxy-D-arabino-heptonate contacts are provided by residues 272 to 276 (RNLLN) and His-279. His-279 contributes to the Zn(2+) binding site. His-283 acts as the Proton acceptor; for 3-dehydroquinate synthase activity in catalysis. 7-phospho-2-dehydro-3-deoxy-D-arabino-heptonate-binding residues include His-295 and Lys-364. Residue His-295 coordinates Zn(2+). Positions 405–872 (VYPFSNIPQE…WDVLHTELGA (468 aa)) are EPSP synthase. The active-site For EPSP synthase activity is Cys-854. Residues 891–1081 (SVVLIGMRAA…VPNKRSAFVC (191 aa)) form a shikimate kinase region. Position 896-903 (896-903 (GMRAAGKS)) interacts with ATP. The 3-dehydroquinase stretch occupies residues 1082-1294 (LTFGDLTEKA…SAPGQLTLAQ (213 aa)). His-1199 serves as the catalytic Proton acceptor; for 3-dehydroquinate dehydratase activity. Lys-1228 serves as the catalytic Schiff-base intermediate with substrate; for 3-dehydroquinate dehydratase activity. The tract at residues 1307-1589 (SKKFFVVGNP…QEIFNAVTRD (283 aa)) is shikimate dehydrogenase.

It in the N-terminal section; belongs to the sugar phosphate cyclases superfamily. Dehydroquinate synthase family. This sequence in the 2nd section; belongs to the EPSP synthase family. The protein in the 3rd section; belongs to the shikimate kinase family. In the 4th section; belongs to the type-I 3-dehydroquinase family. It in the C-terminal section; belongs to the shikimate dehydrogenase family. In terms of assembly, homodimer. It depends on Zn(2+) as a cofactor.

It is found in the cytoplasm. The enzyme catalyses 7-phospho-2-dehydro-3-deoxy-D-arabino-heptonate = 3-dehydroquinate + phosphate. It catalyses the reaction 3-dehydroquinate = 3-dehydroshikimate + H2O. It carries out the reaction shikimate + NADP(+) = 3-dehydroshikimate + NADPH + H(+). The catalysed reaction is shikimate + ATP = 3-phosphoshikimate + ADP + H(+). The enzyme catalyses 3-phosphoshikimate + phosphoenolpyruvate = 5-O-(1-carboxyvinyl)-3-phosphoshikimate + phosphate. The protein operates within metabolic intermediate biosynthesis; chorismate biosynthesis; chorismate from D-erythrose 4-phosphate and phosphoenolpyruvate: step 2/7. It functions in the pathway metabolic intermediate biosynthesis; chorismate biosynthesis; chorismate from D-erythrose 4-phosphate and phosphoenolpyruvate: step 3/7. Its pathway is metabolic intermediate biosynthesis; chorismate biosynthesis; chorismate from D-erythrose 4-phosphate and phosphoenolpyruvate: step 4/7. It participates in metabolic intermediate biosynthesis; chorismate biosynthesis; chorismate from D-erythrose 4-phosphate and phosphoenolpyruvate: step 5/7. The protein operates within metabolic intermediate biosynthesis; chorismate biosynthesis; chorismate from D-erythrose 4-phosphate and phosphoenolpyruvate: step 6/7. Its function is as follows. The AROM polypeptide catalyzes 5 consecutive enzymatic reactions in prechorismate polyaromatic amino acid biosynthesis. The sequence is that of Pentafunctional AROM polypeptide from Zygosaccharomyces rouxii (strain ATCC 2623 / CBS 732 / NBRC 1130 / NCYC 568 / NRRL Y-229).